The sequence spans 278 residues: MFCTSPATRGDSSESKPGASVDVNGKMEYGSAPGPLNGRDTSRGPGAFCTPGWEIHPARLVEDINRVFLCIAQSSGRVTRDSRRLRRICLDFYLMGRTRQRPTLACWEELLQLQPTQTQCLRATLMEVSHRPPRGEDGFIEAPNVPLHRSALECDVSDDGGEDDSDDDGSTPSDVIEFRDSDAESSDGEDFIVEEESEESTDSCEPDGVPGDCYRDGDGCNTPSPKRPQRAIERYAGAETAEYTAAKALTALGEGGVDWKRRRHEAPRRHDIPPPHGV.

2 disordered regions span residues 1-42 (MFCT…RDTS) and 154-229 (CDVS…KRPQ). The IE62-binding stretch occupies residues 1 to 142 (MFCTSPATRG…PRGEDGFIEA (142 aa)). Composition is skewed to acidic residues over residues 155 to 169 (DVSDDGGEDDSDDDG) and 183 to 205 (AESSDGEDFIVEEESEESTDSCE).

The protein belongs to the herpesviridae ICP22 family. Interacts with IE62; this interaction modulates the function of IE62. Interacts with several components of host pre-initiation complex including GTF2E1, GTF2H2 and POLR2A; these interactions lead to repression of gene transcription. Interacts with host ASF1A; altering its ability to bind histones. In terms of processing, phosphorylated in vitro by host and by protein kinase ORF47.

It localises to the host cytoplasm. It is found in the host nucleus. The protein localises to the virion tegument. In terms of biological role, immediate early (EI) protein that functions as a transcriptional regulator of cellular and viral mRNAs mainly by interacting with several general transcription factors thereby disorganizing the preinitiation complex at certain promoters. May additionally help to regulate levels of histones in virus-infected cells by interacting with host ASF1. By inhibiting host transcriptional program, IE63 plays a major role in the ability of VZV to overcome the innate immune response to the virus. The sequence is that of Transcriptional regulator ICP22 homolog from Varicella-zoster virus (strain Dumas) (HHV-3).